We begin with the raw amino-acid sequence, 214 residues long: MQNLIVAVVAYLIGSVSFAVIVSAAMGLDDPRSYGSGNPGATNVLRSGNKKAAILTLIGDAFKGWLPVWFVVHYGARYGLDETSVAIASVAVFLGHLYPVFFRFKGGKGVATAAGVLLAINPILGVATLLTWLIVAFFTRYSSLAALAAAVFAPIFDGFLFGPHVIALAIVVMSSLLVWRHRGNIAKLMRGQESRIGDKKKADAAAKPAGGSDV.

5 helical membrane-spanning segments follow: residues 4-24 (LIVA…IVSA), 52-72 (AAIL…WFVV), 82-102 (ETSV…PVFF), 118-138 (LAIN…VAFF), and 159-179 (FLFG…LLVW).

The protein belongs to the PlsY family. As to quaternary structure, probably interacts with PlsX.

Its subcellular location is the cell inner membrane. It carries out the reaction an acyl phosphate + sn-glycerol 3-phosphate = a 1-acyl-sn-glycero-3-phosphate + phosphate. It functions in the pathway lipid metabolism; phospholipid metabolism. Catalyzes the transfer of an acyl group from acyl-phosphate (acyl-PO(4)) to glycerol-3-phosphate (G3P) to form lysophosphatidic acid (LPA). This enzyme utilizes acyl-phosphate as fatty acyl donor, but not acyl-CoA or acyl-ACP. The chain is Glycerol-3-phosphate acyltransferase from Paraburkholderia phytofirmans (strain DSM 17436 / LMG 22146 / PsJN) (Burkholderia phytofirmans).